Here is a 798-residue protein sequence, read N- to C-terminus: MTSYQSQLGDGGGGEPIAEELAESQQSISIAEFFEKNKQMLGFDSDAKALVTAVKEAVDNALDAAEEAGILPDIYVEIEDRGDYYRLTVEDNGPGITKEQIPKVFGKLLYGSRFHAREQTRGQQGIGISAAVLYSQLTSGKPAKITSKTDSHSSAQYFELTIDTDTNEPEIDHEREATWERPHGTRIELEMEGNMRARKQLHDYIKYTAVVNPHARVEFHEPEDSFKSERATEELPPETEEIRPHPHGVELGTLLKMLDATDSYSLSGFLQAEFTRVGNKTADGVIDSFRDRHFGREMAWSPPQPHEDVDIETAVSDAVANKSAEATAAFARAVADEVTDMAALSHAELSAVVASVADDIEAEHDETFGETVRENAVEAAWKSVTDDVSADCYALVDGATTTRKDDAAVEGLSRRLAEKFTDQEDARNRFRRSTLREFVDRAADATEEYDDATFGETARENVVEAVWERAVTVPDEPPTVTEVADNRDAAARLLEAMRSTDILSPPTDCLAPISEDLVKAGLKKEYDAEFYTSVTRDASVHGGDPFVVEVGIAHGGDIAVDGSVETLRFANRVPLVYQRGACATVDVLKGVNWRNYGLDQPGGSGMPSGPAVIMVHVASTSVPFTSESKDAVANIPEIEDELRLALQQAGRDLQSHLKKQRSLEKRRRKQDVIADILPDMAAKLSEVTDREPLDVEDSLARIMNNVLVERTVEESTVQLSVHNYGDTNVGPEVTDIVSQEPDGAESATVVEMDGEWFLKWSPTVGGGETATLEYEVDGDAEFDISVEGIEAEKLTVDA.

Residues N60, D91, 112–113 (SR), and 122–129 (GQQGIGIS) contribute to the ATP site. Basic and acidic residues predominate over residues 221–233 (EPEDSFKSERATE). Residues 221–245 (EPEDSFKSERATEELPPETEEIRPH) are disordered. K629 contributes to the ATP binding site.

It belongs to the TOP6B family. In terms of assembly, homodimer. Heterotetramer of two Top6A and two Top6B chains.

The catalysed reaction is ATP-dependent breakage, passage and rejoining of double-stranded DNA.. Its function is as follows. Relaxes both positive and negative superturns and exhibits a strong decatenase activity. The sequence is that of Type 2 DNA topoisomerase 6 subunit B from Natronomonas pharaonis (strain ATCC 35678 / DSM 2160 / CIP 103997 / JCM 8858 / NBRC 14720 / NCIMB 2260 / Gabara) (Halobacterium pharaonis).